Consider the following 790-residue polypeptide: Phenylalanine--tRNA ligase beta subunit (790 aa).

One can recognise a tRNA-binding domain in the interval 40–149; it reads AEKVSGVVVG…IDAPVGTDIN (110 aa). In terms of domain architecture, B5 spans 402–479; that stretch reads NKQIKINLSI…RIYGYSKLPE (78 aa). Positions 457, 463, 466, and 467 each coordinate Mg(2+). One can recognise an FDX-ACB domain in the interval 698-789; it reads SKYPSVSRDI…LKTKFNIEQR (92 aa).

This sequence belongs to the phenylalanyl-tRNA synthetase beta subunit family. Type 1 subfamily. Tetramer of two alpha and two beta subunits. It depends on Mg(2+) as a cofactor.

The protein resides in the cytoplasm. It carries out the reaction tRNA(Phe) + L-phenylalanine + ATP = L-phenylalanyl-tRNA(Phe) + AMP + diphosphate + H(+). In Francisella tularensis subsp. tularensis (strain SCHU S4 / Schu 4), this protein is Phenylalanine--tRNA ligase beta subunit.